A 132-amino-acid chain; its full sequence is Small ribosomal subunit protein uS8c (132 aa).

Belongs to the universal ribosomal protein uS8 family. As to quaternary structure, part of the 30S ribosomal subunit.

Its subcellular location is the plastid. It is found in the chloroplast. One of the primary rRNA binding proteins, it binds directly to 16S rRNA central domain where it helps coordinate assembly of the platform of the 30S subunit. The protein is Small ribosomal subunit protein uS8c (rps8) of Chaetosphaeridium globosum (Charophycean green alga).